The primary structure comprises 571 residues: Proline--tRNA ligase (571 aa).

The protein belongs to the class-II aminoacyl-tRNA synthetase family. ProS type 1 subfamily. In terms of assembly, homodimer.

The protein localises to the cytoplasm. It carries out the reaction tRNA(Pro) + L-proline + ATP = L-prolyl-tRNA(Pro) + AMP + diphosphate. Catalyzes the attachment of proline to tRNA(Pro) in a two-step reaction: proline is first activated by ATP to form Pro-AMP and then transferred to the acceptor end of tRNA(Pro). As ProRS can inadvertently accommodate and process non-cognate amino acids such as alanine and cysteine, to avoid such errors it has two additional distinct editing activities against alanine. One activity is designated as 'pretransfer' editing and involves the tRNA(Pro)-independent hydrolysis of activated Ala-AMP. The other activity is designated 'posttransfer' editing and involves deacylation of mischarged Ala-tRNA(Pro). The misacylated Cys-tRNA(Pro) is not edited by ProRS. This Buchnera aphidicola subsp. Schizaphis graminum (strain Sg) protein is Proline--tRNA ligase.